The sequence spans 414 residues: Bifunctional protein GlmU (414 aa).

A pyrophosphorylase region spans residues 1 to 208; sequence MDAVILCAGS…SSKLYGIELN (208 aa). Residues 6-9, glutamine 74, and glycine 79 each bind UTP; that span reads LCAG. Positions 80, 130, 142, and 162 each coordinate N-acetyl-alpha-D-glucosamine 1-phosphate. The interval 209-228 is linker; it reads GYWNDIGRPWDVLSANNYFL. The interval 229-414 is N-acetyltransferase; that stretch reads KNIMPKISGN…KDELIIKKRN (186 aa). Catalysis depends on histidine 312, which acts as the Proton acceptor. Residues alanine 388 and lysine 405 each coordinate acetyl-CoA.

It in the N-terminal section; belongs to the N-acetylglucosamine-1-phosphate uridyltransferase family. The protein in the C-terminal section; belongs to the transferase hexapeptide repeat family.

It carries out the reaction N-acetyl-alpha-D-glucosamine 1-phosphate + UTP + H(+) = UDP-N-acetyl-alpha-D-glucosamine + diphosphate. The catalysed reaction is alpha-D-glucosamine 1-phosphate + acetyl-CoA = N-acetyl-alpha-D-glucosamine 1-phosphate + CoA + H(+). Its pathway is nucleotide-sugar biosynthesis; UDP-N-acetyl-alpha-D-glucosamine biosynthesis; N-acetyl-alpha-D-glucosamine 1-phosphate from alpha-D-glucosamine 6-phosphate (route II): step 2/2. It participates in nucleotide-sugar biosynthesis; UDP-N-acetyl-alpha-D-glucosamine biosynthesis; UDP-N-acetyl-alpha-D-glucosamine from N-acetyl-alpha-D-glucosamine 1-phosphate: step 1/1. Catalyzes the last two sequential reactions in the de novo biosynthetic pathway for UDP-N-acetyl-glucosamine (UDP-GlcNAc). Responsible for the acetylation of GlcN-1-P to GlcNAc-1-P, and for the uridyl transfer from UTP to GlcNAc-1-P, to produce UDP-GlcNAc and pyrophosphate. The chain is Bifunctional protein GlmU from Methanococcus vannielii (strain ATCC 35089 / DSM 1224 / JCM 13029 / OCM 148 / SB).